The following is a 517-amino-acid chain: Tyrosine-protein kinase Fgr (517 aa).

Residue Gly2 is the site of N-myristoyl glycine attachment. 2 S-palmitoyl cysteine lipidation sites follow: Cys3 and Cys6. The span at 17-33 shows a compositional bias: basic and acidic residues; that stretch reads VGLEGDFRSQGAEERYY. Positions 17 to 46 are disordered; it reads VGLEGDFRSQGAEERYYPDPTQGRSSSISP. At Tyr32 the chain carries Phosphotyrosine. Residue Ser50 is modified to Phosphoserine. Residues 65–126 form the SH3 domain; that stretch reads TGVTIFVALY…PSNYVAPVDS (62 aa). Residues 132–229 enclose the SH2 domain; the sequence is WYFGKISRKD…GLCYLLTAPC (98 aa). Phosphotyrosine is present on Tyr196. Position 206 is a phosphoserine (Ser206). The 254-residue stretch at 251–504 folds into the Protein kinase domain; that stretch reads IALDRRLGTG…YLQSFLEDYF (254 aa). Residues 257–265 and Lys279 contribute to the ATP site; that span reads LGTGCFGDV. The active-site Proton acceptor is the Asp370. Tyr400 carries the post-translational modification Phosphotyrosine; by autocatalysis. Tyr511 carries the post-translational modification Phosphotyrosine; by SRC.

This sequence belongs to the protein kinase superfamily. Tyr protein kinase family. SRC subfamily. As to quaternary structure, interacts with ITGB1, ITGB2, MS4A2/FCER1B and FCGR2. Interacts (via SH2 domain) with SYK (tyrosine phosphorylated). Interacts (via SH2 domain) with FLT3 (tyrosine phosphorylated). Interacts with PTK2/FAK1. Interacts (via SH2 domain) with HCLS1 (tyrosine phosphorylated by SYK). Interacts with SIRPA and PTPNS1. Interacts (not phosphorylated on tyrosine residues) with CBL; FGR tyrosine phosphorylation promotes dissociation. Interacts with CLNK. Post-translationally, ubiquitinated. Becomes ubiquitinated in response to ITGB2 signaling; this does not lead to degradation. Phosphorylated. Autophosphorylated on tyrosine residues. Becomes phosphorylated in response to FCGR2 engagement, cell adhesion and signaling by ITGB2. Prior phosphorylation at Tyr-511 by SRC inhibits ulterior autophosphorylation at Tyr-400. Detected in brain cortex (at protein level).

It is found in the cell membrane. Its subcellular location is the cell projection. The protein localises to the ruffle membrane. It localises to the cytoplasm. The protein resides in the cytosol. It is found in the cytoskeleton. Its subcellular location is the mitochondrion inner membrane. The protein localises to the mitochondrion intermembrane space. The catalysed reaction is L-tyrosyl-[protein] + ATP = O-phospho-L-tyrosyl-[protein] + ADP + H(+). Its activity is regulated as follows. Activated by autophosphorylation. Prior phosphorylation at Tyr-511 by SRC inhibits ulterior autophosphorylation at Tyr-400. Activated by phorbol myristate acetate, phosphatidic acid and poly-Lys. Binding (via SH2 domain) of HCLS1 that is already phosphorylated by SYK strongly increases kinase activity. Non-receptor tyrosine-protein kinase that transmits signals from cell surface receptors devoid of kinase activity and contributes to the regulation of immune responses, including neutrophil, monocyte, macrophage and mast cell functions, cytoskeleton remodeling in response to extracellular stimuli, phagocytosis, cell adhesion and migration. Promotes mast cell degranulation, release of inflammatory cytokines and IgE-mediated anaphylaxis. Acts downstream of receptors that bind the Fc region of immunoglobulins, such as MS4A2/FCER1B, FCER1G and FCGR2. Acts downstream of ITGB1 and ITGB2, and regulates actin cytoskeleton reorganization, cell spreading and adhesion. Depending on the context, activates or inhibits cellular responses. Functions as a negative regulator of ITGB2 signaling, phagocytosis and SYK activity in monocytes. Required for normal ITGB1 and ITGB2 signaling, normal cell spreading and adhesion in neutrophils and macrophages. Functions as a positive regulator of cell migration and regulates cytoskeleton reorganization via RAC1 activation. Phosphorylates SYK (in vitro) and promotes SYK-dependent activation of AKT1 and MAP kinase signaling. Phosphorylates PLD2 in antigen-stimulated mast cells, leading to PLD2 activation and the production of the signaling molecules lysophosphatidic acid and diacylglycerol. Promotes activation of PIK3R1. Phosphorylates FASLG, and thereby regulates its ubiquitination and subsequent internalization. Phosphorylates ABL1. Promotes phosphorylation of CBL, CTTN, PIK3R1, PTK2/FAK1, PTK2B/PYK2 and VAV2. Phosphorylates HCLS1 that has already been phosphorylated by SYK, but not unphosphorylated HCLS1. Together with CLNK, it acts as a negative regulator of natural killer cell-activating receptors and inhibits interferon-gamma production. This Rattus norvegicus (Rat) protein is Tyrosine-protein kinase Fgr (Fgr).